An 838-amino-acid polypeptide reads, in one-letter code: Periplasmic nitrate reductase (838 aa).

The tat-type signal signal peptide spans 1 to 29 (MKVSRRAFIKQTAAAATASVAGVTLPAGA). Positions 41 to 97 (LKWSKAPCRFCGTGCGVEVAVKDNRVVATQGDPKAEVNRGLNCVKGYFLSKIMYGKD) constitute a 4Fe-4S Mo/W bis-MGD-type domain. [4Fe-4S] cluster contacts are provided by Cys-48, Cys-51, Cys-55, and Cys-83. Mo-bis(molybdopterin guanine dinucleotide) contacts are provided by residues Lys-85, Gln-152, Asn-177, Cys-181, 214–221 (WGSNMAEM), 245–249 (STFTH), Met-382, Gln-386, Asn-492, 518–519 (SD), Lys-541, Asp-568, and 728–737 (TGRVLEHWHS). Trp-804 contributes to the substrate binding site. Residues Asn-812 and Lys-829 each contribute to the Mo-bis(molybdopterin guanine dinucleotide) site.

This sequence belongs to the prokaryotic molybdopterin-containing oxidoreductase family. NasA/NapA/NarB subfamily. As to quaternary structure, component of the periplasmic nitrate reductase NapAB complex composed of NapA and NapB. [4Fe-4S] cluster serves as cofactor. Mo-bis(molybdopterin guanine dinucleotide) is required as a cofactor. Predicted to be exported by the Tat system. The position of the signal peptide cleavage has not been experimentally proven.

The protein localises to the periplasm. It catalyses the reaction 2 Fe(II)-[cytochrome] + nitrate + 2 H(+) = 2 Fe(III)-[cytochrome] + nitrite + H2O. Catalytic subunit of the periplasmic nitrate reductase complex NapAB. Receives electrons from NapB and catalyzes the reduction of nitrate to nitrite. The sequence is that of Periplasmic nitrate reductase from Ralstonia pickettii (strain 12J).